We begin with the raw amino-acid sequence, 329 residues long: NADH-quinone oxidoreductase subunit H (329 aa).

The next 8 membrane-spanning stretches (helical) occupy residues isoleucine 9–valine 29, isoleucine 79–proline 99, valine 117–glycine 137, valine 162–isoleucine 182, glycine 188–alanine 208, phenylalanine 243–phenylalanine 263, leucine 269–phenylalanine 289, and tryptophan 309–leucine 329.

Belongs to the complex I subunit 1 family. NDH-1 is composed of 14 different subunits. Subunits NuoA, H, J, K, L, M, N constitute the membrane sector of the complex.

The protein resides in the cell inner membrane. It carries out the reaction a quinone + NADH + 5 H(+)(in) = a quinol + NAD(+) + 4 H(+)(out). Its function is as follows. NDH-1 shuttles electrons from NADH, via FMN and iron-sulfur (Fe-S) centers, to quinones in the respiratory chain. The immediate electron acceptor for the enzyme in this species is believed to be ubiquinone. Couples the redox reaction to proton translocation (for every two electrons transferred, four hydrogen ions are translocated across the cytoplasmic membrane), and thus conserves the redox energy in a proton gradient. This subunit may bind ubiquinone. The chain is NADH-quinone oxidoreductase subunit H from Wolinella succinogenes (strain ATCC 29543 / DSM 1740 / CCUG 13145 / JCM 31913 / LMG 7466 / NCTC 11488 / FDC 602W) (Vibrio succinogenes).